The sequence spans 51 residues: Insulin (51 aa).

3 cysteine pairs are disulfide-bonded: Cys-7-Cys-37, Cys-19-Cys-50, and Cys-36-Cys-41.

It belongs to the insulin family. Heterodimer of a B chain and an A chain linked by two disulfide bonds.

The protein resides in the secreted. Insulin decreases blood glucose concentration. It increases cell permeability to monosaccharides, amino acids and fatty acids. It accelerates glycolysis, the pentose phosphate cycle, and glycogen synthesis in liver. This is Insulin (INS) from Capra hircus (Goat).